Consider the following 421-residue polypeptide: Phosphoglycerate kinase (421 aa).

Residues Val-23, Asp-24, Phe-25, Asn-26, Gln-41, Arg-42, Ser-65, His-66, Gly-68, Arg-69, Leu-124, Arg-125, His-172, and Arg-173 each contribute to the (2R)-3-phosphoglycerate site. Gly-216 contacts ADP. Residue Gly-216 participates in CDP binding. Lys-218 contacts AMP. Asp-221 is a CDP binding site. Asp-221 provides a ligand contact to Mg(2+). Lys-222 is a binding site for AMP. Lys-222 is a binding site for ATP. Position 240 (Gly-240) interacts with ADP. Residue Gly-240 participates in CDP binding. Residues Gly-241 and Gly-315 each contribute to the AMP site. 2 residues coordinate ATP: Gly-241 and Gly-315. Gly-340 and Phe-345 together coordinate CDP. Phe-345 contributes to the ADP binding site. Residue Glu-346 participates in AMP binding. The ATP site is built by Glu-346, Asp-377, and Thr-378. Asp-377 provides a ligand contact to Mg(2+).

Belongs to the phosphoglycerate kinase family. In terms of assembly, monomer. It depends on Mg(2+) as a cofactor.

It is found in the cytoplasm. It localises to the mitochondrion. It carries out the reaction (2R)-3-phosphoglycerate + ATP = (2R)-3-phospho-glyceroyl phosphate + ADP. It functions in the pathway carbohydrate degradation; glycolysis; pyruvate from D-glyceraldehyde 3-phosphate: step 2/5. Catalyzes one of the two ATP producing reactions in the glycolytic pathway via the reversible conversion of 1,3-diphosphoglycerate to 3-phosphoglycerate. Both L- and D- forms of purine and pyrimidine nucleotides can be used as substrates, but the activity is much lower on pyrimidines. Negatively regulates the biosynthesis of acetyl-CoA from pyruvate in the mitochondrion. The sequence is that of Phosphoglycerate kinase (pgkA) from Emericella nidulans (strain FGSC A4 / ATCC 38163 / CBS 112.46 / NRRL 194 / M139) (Aspergillus nidulans).